A 225-amino-acid chain; its full sequence is DnaA regulatory inactivator Hda (225 aa).

This sequence belongs to the DnaA family. HdA subfamily. In terms of assembly, the active form seems to be an ADP-bound monomer. Forms the RIDA complex (regulatory inactivation of DnaA) of ATP-DnaA, ADP-Hda and the DNA-loaded beta sliding clamp (dnaN).

Functionally, mediates the interaction of DNA replication initiator protein DnaA with DNA polymerase subunit beta sliding clamp (dnaN). Stimulates hydrolysis of ATP-DnaA to ADP-DnaA, rendering DnaA inactive for reinitiation, a process called regulatory inhibition of DnaA or RIDA. This is DnaA regulatory inactivator Hda from Klebsiella pneumoniae (strain 342).